A 559-amino-acid chain; its full sequence is Thermosome subunit alpha (559 aa).

The segment covering 536-552 (SGEKKGEKKEGGEEEKS) has biased composition (basic and acidic residues). A disordered region spans residues 536-559 (SGEKKGEKKEGGEEEKSSTPSSLE).

It belongs to the TCP-1 chaperonin family. Forms a Heterooligomeric complex of two stacked nine-membered rings; one of alpha and the other of beta subunits.

In terms of biological role, molecular chaperone; binds unfolded polypeptides in vitro, and has a weak ATPase activity. The polypeptide is Thermosome subunit alpha (thsA) (Sulfurisphaera tokodaii (strain DSM 16993 / JCM 10545 / NBRC 100140 / 7) (Sulfolobus tokodaii)).